Reading from the N-terminus, the 118-residue chain is MARIKRGVVAHARHKKILKQAKGYYGARSRIYRVAHQAVIKAGQYAYRDRRQRKRQFRQLWISRINAAVRQSKMSYSNFIFGLKKASINIDRKILSDIAIFDLLSFNALVKKAKEALL.

This sequence belongs to the bacterial ribosomal protein bL20 family.

Functionally, binds directly to 23S ribosomal RNA and is necessary for the in vitro assembly process of the 50S ribosomal subunit. It is not involved in the protein synthesizing functions of that subunit. The chain is Large ribosomal subunit protein bL20 from Buchnera aphidicola subsp. Acyrthosiphon pisum (strain 5A).